The sequence spans 232 residues: NAD(P)H-quinone oxidoreductase subunit K 1 (232 aa).

[4Fe-4S] cluster contacts are provided by Cys49, Cys50, Cys114, and Cys145.

This sequence belongs to the complex I 20 kDa subunit family. NDH-1 can be composed of about 15 different subunits; different subcomplexes with different compositions have been identified which probably have different functions. It depends on [4Fe-4S] cluster as a cofactor.

It localises to the cell inner membrane. It catalyses the reaction a plastoquinone + NADH + (n+1) H(+)(in) = a plastoquinol + NAD(+) + n H(+)(out). The enzyme catalyses a plastoquinone + NADPH + (n+1) H(+)(in) = a plastoquinol + NADP(+) + n H(+)(out). In terms of biological role, NDH-1 shuttles electrons from an unknown electron donor, via FMN and iron-sulfur (Fe-S) centers, to quinones in the respiratory and/or the photosynthetic chain. The immediate electron acceptor for the enzyme in this species is believed to be plastoquinone. Couples the redox reaction to proton translocation, and thus conserves the redox energy in a proton gradient. Cyanobacterial NDH-1 also plays a role in inorganic carbon-concentration. The protein is NAD(P)H-quinone oxidoreductase subunit K 1 of Gloeobacter violaceus (strain ATCC 29082 / PCC 7421).